Reading from the N-terminus, the 125-residue chain is Methylglyoxal synthase (125 aa).

The MGS-like domain maps to 1-125; the sequence is MTQRLRIALI…TAEKLVRALD (125 aa). Substrate contacts are provided by residues His-12, Lys-16, 38-41, and 59-60; these read TGTT and SG. The active-site Proton donor/acceptor is Asp-65. His-92 provides a ligand contact to substrate.

It belongs to the methylglyoxal synthase family.

The enzyme catalyses dihydroxyacetone phosphate = methylglyoxal + phosphate. Its function is as follows. Catalyzes the formation of methylglyoxal from dihydroxyacetone phosphate. In Brucella abortus (strain S19), this protein is Methylglyoxal synthase.